The sequence spans 233 residues: 2-amino-5-formylamino-6-ribosylaminopyrimidin-4(3H)-one 5'-monophosphate deformylase (233 aa).

Residues Glu33, His35, Asp44, and His114 each coordinate Fe cation.

It belongs to the creatininase superfamily. FAPy deformylase family. As to quaternary structure, homodimer. Requires Fe(2+) as cofactor. The cofactor is Zn(2+).

The enzyme catalyses 2-amino-5-formylamino-6-(5-phospho-D-ribosylamino)pyrimidin-4(3H)-one + H2O = 2,5-diamino-6-(1-D-ribosylamino)pyrimidin-4(3H)-one 5'-phosphate + formate + H(+). Its pathway is cofactor biosynthesis; coenzyme F420 biosynthesis. It participates in cofactor biosynthesis; riboflavin biosynthesis. Catalyzes the hydrolysis of the formamide of 2-amino-5-formylamino-6-ribosylamino-4(3H)-pyrimidinone 5'-monophosphate (FAPy) to form 2,5-diamino-6-ribosylamino-4(3H)-pyrimidinone 5'-phosphate (APy). The chain is 2-amino-5-formylamino-6-ribosylaminopyrimidin-4(3H)-one 5'-monophosphate deformylase from Methanosphaera stadtmanae (strain ATCC 43021 / DSM 3091 / JCM 11832 / MCB-3).